The sequence spans 185 residues: Ribose 1,5-bisphosphate phosphokinase PhnN (185 aa).

Residue 10-17 coordinates ATP; that stretch reads GPSGSGKD.

The protein belongs to the ribose 1,5-bisphosphokinase family.

The catalysed reaction is alpha-D-ribose 1,5-bisphosphate + ATP = 5-phospho-alpha-D-ribose 1-diphosphate + ADP. It participates in metabolic intermediate biosynthesis; 5-phospho-alpha-D-ribose 1-diphosphate biosynthesis; 5-phospho-alpha-D-ribose 1-diphosphate from D-ribose 5-phosphate (route II): step 3/3. Catalyzes the phosphorylation of ribose 1,5-bisphosphate to 5-phospho-D-ribosyl alpha-1-diphosphate (PRPP). This is Ribose 1,5-bisphosphate phosphokinase PhnN from Escherichia coli O157:H7.